A 216-amino-acid polypeptide reads, in one-letter code: TATA-box-binding protein-like 1 (216 aa).

A run of 2 repeats spans residues 38–121 (KPVI…QRLG) and 126–210 (FNHF…ILLQ).

Belongs to the TBP family.

It is found in the nucleus. In terms of biological role, TATA box-binding transcription factor. Members of the TBP family are differentially required to regulate transcription and development during early embryogenesis. The polypeptide is TATA-box-binding protein-like 1 (trf1) (Entamoeba histolytica (strain ATCC 30459 / HM-1:IMSS / ABRM)).